The sequence spans 494 residues: UPF0371 protein M6_Spy1067 (494 aa).

It belongs to the UPF0371 family.

In Streptococcus pyogenes serotype M6 (strain ATCC BAA-946 / MGAS10394), this protein is UPF0371 protein M6_Spy1067.